The sequence spans 313 residues: Acetyl-coenzyme A carboxylase carboxyl transferase subunit alpha (313 aa).

Residues 36–286 form the CoA carboxyltransferase C-terminal domain; that stretch reads RLDKEVKTIY…KEYFLDTLRT (251 aa).

The protein belongs to the AccA family. Acetyl-CoA carboxylase is a heterohexamer composed of biotin carboxyl carrier protein (AccB), biotin carboxylase (AccC) and two subunits each of ACCase subunit alpha (AccA) and ACCase subunit beta (AccD).

The protein localises to the cytoplasm. It carries out the reaction N(6)-carboxybiotinyl-L-lysyl-[protein] + acetyl-CoA = N(6)-biotinyl-L-lysyl-[protein] + malonyl-CoA. Its pathway is lipid metabolism; malonyl-CoA biosynthesis; malonyl-CoA from acetyl-CoA: step 1/1. In terms of biological role, component of the acetyl coenzyme A carboxylase (ACC) complex. First, biotin carboxylase catalyzes the carboxylation of biotin on its carrier protein (BCCP) and then the CO(2) group is transferred by the carboxyltransferase to acetyl-CoA to form malonyl-CoA. The protein is Acetyl-coenzyme A carboxylase carboxyl transferase subunit alpha of Helicobacter acinonychis (strain Sheeba).